The chain runs to 223 residues: Triosephosphate isomerase (223 aa).

10 to 12 (NFK) provides a ligand contact to substrate. The active-site Electrophile is His94. Glu142 (proton acceptor) is an active-site residue. Substrate-binding positions include Ile147, Gly182, and 203-204 (AS).

Belongs to the triosephosphate isomerase family. As to quaternary structure, homotetramer; dimer of dimers.

Its subcellular location is the cytoplasm. It carries out the reaction D-glyceraldehyde 3-phosphate = dihydroxyacetone phosphate. It participates in carbohydrate biosynthesis; gluconeogenesis. It functions in the pathway carbohydrate degradation; glycolysis; D-glyceraldehyde 3-phosphate from glycerone phosphate: step 1/1. In terms of biological role, involved in the gluconeogenesis. Catalyzes stereospecifically the conversion of dihydroxyacetone phosphate (DHAP) to D-glyceraldehyde-3-phosphate (G3P). The sequence is that of Triosephosphate isomerase from Archaeoglobus fulgidus (strain ATCC 49558 / DSM 4304 / JCM 9628 / NBRC 100126 / VC-16).